A 505-amino-acid polypeptide reads, in one-letter code: Maturase K (505 aa).

The protein belongs to the intron maturase 2 family. MatK subfamily.

It is found in the plastid. Its subcellular location is the chloroplast. In terms of biological role, usually encoded in the trnK tRNA gene intron. Probably assists in splicing its own and other chloroplast group II introns. This is Maturase K from Nuphar variegata (Yellow pond lily).